An 86-amino-acid polypeptide reads, in one-letter code: Cell division topological specificity factor (86 aa).

Belongs to the MinE family.

Prevents the cell division inhibition by proteins MinC and MinD at internal division sites while permitting inhibition at polar sites. This ensures cell division at the proper site by restricting the formation of a division septum at the midpoint of the long axis of the cell. The polypeptide is Cell division topological specificity factor (Shewanella loihica (strain ATCC BAA-1088 / PV-4)).